The following is a 345-amino-acid chain: Phosphate acyltransferase (345 aa).

Belongs to the PlsX family. As to quaternary structure, homodimer. Probably interacts with PlsY.

Its subcellular location is the cytoplasm. It catalyses the reaction a fatty acyl-[ACP] + phosphate = an acyl phosphate + holo-[ACP]. It functions in the pathway lipid metabolism; phospholipid metabolism. Functionally, catalyzes the reversible formation of acyl-phosphate (acyl-PO(4)) from acyl-[acyl-carrier-protein] (acyl-ACP). This enzyme utilizes acyl-ACP as fatty acyl donor, but not acyl-CoA. This is Phosphate acyltransferase from Limosilactobacillus fermentum (strain NBRC 3956 / LMG 18251) (Lactobacillus fermentum).